Consider the following 468-residue polypeptide: Interleukin-6 receptor subunit alpha (468 aa).

A signal peptide spans 1–19 (MLAVGCALLAALLAAPGAA). The Extracellular portion of the chain corresponds to 20 to 365 (LAPRRCPAQE…VQDSSSVPLP (346 aa)). 4 disulfides stabilise this stretch: cysteine 25–cysteine 193, cysteine 47–cysteine 96, cysteine 121–cysteine 132, and cysteine 165–cysteine 176. One can recognise an Ig-like C2-type domain in the interval 26 to 112 (PAQEVARGVL…AGTVHLLVDV (87 aa)). Asparagine 55 and asparagine 93 each carry an N-linked (GlcNAc...) asparagine glycan. Fibronectin type-III domains lie at 113–217 (PPEE…LQPD) and 218–316 (PPAN…TPWT). N-linked (GlcNAc...) asparagine glycans are attached at residues asparagine 221 and asparagine 245. Positions 303-307 (WSEWS) match the WSXWS motif motif. The interval 303 to 328 (WSEWSPEAMGTPWTESRSPPAENEVS) is disordered. Asparagine 350 is a glycosylation site (N-linked (GlcNAc...) asparagine). The O-linked (GlcNAc) threonine glycan is linked to threonine 352. The chain crosses the membrane as a helical span at residues 366–386 (TFLVAGGSLAFGTLLCIAIVL). Residues 387–468 (RFKKTWKLRA…ISNTDYFFPR (82 aa)) are Cytoplasmic-facing. The span at 421-433 (TPVLVPLISPPVS) shows a compositional bias: pro residues. Residues 421 to 468 (TPVLVPLISPPVSPSSLGSDNTSSHNRPDARDPRSPYDISNTDYFFPR) form a disordered region. Over residues 446 to 455 (NRPDARDPRS) the composition is skewed to basic and acidic residues. Over residues 458-468 (DISNTDYFFPR) the composition is skewed to polar residues.

Belongs to the type I cytokine receptor family. Type 3 subfamily. As to quaternary structure, component of a hexamer of two molecules each of IL6, IL6R and IL6ST; first binds to IL6 to associate with the signaling subunit IL6ST. Interacts (via N-terminal ectodomain) with SORL1; this interaction may affect IL6-binding to IL6R, hence decrease IL6 'classic-signaling'. Also interacts with SORL1; this interaction leads to soluble IL6R internalization. May form a trimeric complex with the soluble SORL1 ectodomain and circulating IL6 receptor; this interaction might stabilize circulating IL6, hence promote IL6 'trans-signaling,. In terms of processing, a short soluble form is released from the membrane by proteolysis. The sIL6R is formed mostly by limited proteolysis of membrane-bound receptors, a process referred to as ectodomain shedding, but is also directly secreted from the cells after alternative mRNA splicing. mIL6R is cleaved by the proteases ADAM10 and ADAM17. Glycosylated. Glycosylation is dispensable for transport, signaling, and cell-surface turnover. Glycosylation at Asn-55 is a protease-regulatory exosite. Glycosylation is required for ADAM17-mediated proteolysis. In terms of tissue distribution, expressed in peripheral blood mononuclear cells and weakly found in urine and serum. 1%-20% of the total sIL6R in plasma is generated by alternative splicing.

The protein resides in the cell membrane. It localises to the secreted. Classic and trans-signaling are both inhibited by tocilizumab, a humanized monoclonal antibody that blocks interleukin IL6R signaling. Functionally, part of the receptor for interleukin 6. Binds to IL6 with low affinity, but does not transduce a signal. Signal activation necessitate an association with IL6ST. Activation leads to the regulation of the immune response, acute-phase reactions and hematopoiesis. The interaction with membrane-bound IL6R and IL6ST stimulates 'classic signaling', the restricted expression of the IL6R limits classic IL6 signaling to only a few tissues such as the liver and some cells of the immune system. Whereas the binding of IL6 and soluble IL6R to IL6ST stimulates 'trans-signaling'. Alternatively, 'cluster signaling' occurs when membrane-bound IL6:IL6R complexes on transmitter cells activate IL6ST receptors on neighboring receiver cells. Its function is as follows. Signaling via the membrane-bound IL6R is mostly regenerative and anti-inflammatory. Drives naive CD4(+) T cells to the Th17 lineage, through 'cluster signaling' by dendritic cells. Soluble form of IL6 receptor (sIL6R) that acts as an agonist of IL6 activity. The IL6:sIL6R complex (hyper-IL6) binds to IL6ST/gp130 on cell surfaces and induces signaling also on cells that do not express membrane-bound IL6R in a process called IL6 'trans-signaling'. sIL6R is causative for the pro-inflammatory properties of IL6 and an important player in the development of chronic inflammatory diseases. In complex with IL6, is required for induction of VEGF production. Plays a protective role during liver injury, being required for maintenance of tissue regeneration. 'Trans-signaling' in central nervous system regulates energy and glucose homeostasis. In Homo sapiens (Human), this protein is Interleukin-6 receptor subunit alpha.